The following is a 148-amino-acid chain: Ergosterol biosynthetic protein 28 (148 aa).

Residues 1–25 (MFSLQDVITTTKTTLAAMPKGYLPK) lie on the Cytoplasmic side of the membrane. A helical membrane pass occupies residues 26 to 46 (WLLFISIVSVFNSIQTYVSGL). Residues 47–92 (ELTRKVYERKPTETTHLSARTFGTWTFISCVIRFYGAMYLNEPHIF) lie on the Lumenal side of the membrane. The helical transmembrane segment at 93 to 113 (ELVFMSYMVALFHFGSELLIF) threads the bilayer. The Cytoplasmic portion of the chain corresponds to 114 to 120 (RTCKLGK). A helical membrane pass occupies residues 121–136 (GFMGPLVVSTTSLVWM). At 137 to 148 (YKQREYYTGVAW) the chain is on the lumenal side.

It belongs to the ERG28 family. As to quaternary structure, heterotetramer of ERG25, ERG26, ERG27 and ERG28. ERG28 acts as a scaffold to tether ERG27 and other 4,4-demethylation-related enzymes, forming a demethylation enzyme complex, in the endoplasmic reticulum. Interacts with ERG25, ERG26 and ERG27. Also interacts with ERG1, ERG3, ERG5, ERG6 and ERG11.

The protein localises to the endoplasmic reticulum membrane. In terms of biological role, part of the third module of ergosterol biosynthesis pathway that includes the late steps of the pathway. ERG28 has a role as a scaffold to help anchor the catalytic components of the C-4 demethylation complex ERG25, ERG26 and ERG27 to the endoplasmic reticulum. The third module or late pathway involves the ergosterol synthesis itself through consecutive reactions that mainly occur in the endoplasmic reticulum (ER) membrane. Firstly, the squalene synthase ERG9 catalyzes the condensation of 2 farnesyl pyrophosphate moieties to form squalene, which is the precursor of all steroids. Squalene synthase is crucial for balancing the incorporation of farnesyl diphosphate (FPP) into sterol and nonsterol isoprene synthesis. Secondly, the squalene epoxidase ERG1 catalyzes the stereospecific oxidation of squalene to (S)-2,3-epoxysqualene, which is considered to be a rate-limiting enzyme in steroid biosynthesis. Then, the lanosterol synthase ERG7 catalyzes the cyclization of (S)-2,3 oxidosqualene to lanosterol, a reaction that forms the sterol core. In the next steps, lanosterol is transformed to zymosterol through a complex process involving various demethylation, reduction and desaturation reactions. The lanosterol 14-alpha-demethylase ERG11 (also known as CYP51) catalyzes C14-demethylation of lanosterol to produce 4,4'-dimethyl cholesta-8,14,24-triene-3-beta-ol, which is critical for ergosterol biosynthesis. The C-14 reductase ERG24 reduces the C14=C15 double bond of 4,4-dimethyl-cholesta-8,14,24-trienol to produce 4,4-dimethyl-cholesta-8,24-dienol. 4,4-dimethyl-cholesta-8,24-dienol is substrate of the C-4 demethylation complex ERG25-ERG26-ERG27 in which ERG25 catalyzes the three-step monooxygenation required for the demethylation of 4,4-dimethyl and 4alpha-methylsterols, ERG26 catalyzes the oxidative decarboxylation that results in a reduction of the 3-beta-hydroxy group at the C-3 carbon to an oxo group, and ERG27 is responsible for the reduction of the keto group on the C-3. ERG28 has a role as a scaffold to help anchor ERG25, ERG26 and ERG27 to the endoplasmic reticulum and ERG29 regulates the activity of the iron-containing C4-methylsterol oxidase ERG25. Then, the sterol 24-C-methyltransferase ERG6 catalyzes the methyl transfer from S-adenosyl-methionine to the C-24 of zymosterol to form fecosterol. The C-8 sterol isomerase ERG2 catalyzes the reaction which results in unsaturation at C-7 in the B ring of sterols and thus converts fecosterol to episterol. The sterol-C5-desaturase ERG3 then catalyzes the introduction of a C-5 double bond in the B ring to produce 5-dehydroepisterol. The C-22 sterol desaturase ERG5 further converts 5-dehydroepisterol into ergosta-5,7,22,24(28)-tetraen-3beta-ol by forming the C-22(23) double bond in the sterol side chain. Finally, ergosta-5,7,22,24(28)-tetraen-3beta-ol is substrate of the C-24(28) sterol reductase ERG4 to produce ergosterol. In Saccharomyces cerevisiae (strain ATCC 204508 / S288c) (Baker's yeast), this protein is Ergosterol biosynthetic protein 28.